Here is a 199-residue protein sequence, read N- to C-terminus: Probable GTP-binding protein EngB (199 aa).

In terms of domain architecture, EngB-type G spans 21 to 195 (IYTEIAFLGR…EQKIILESLG (175 aa)). GTP contacts are provided by residues 29 to 36 (GRSNVGKS), 56 to 60 (GKTQL), 81 to 84 (DLPG), 151 to 154 (TKAD), and 174 to 176 (VSN). 2 residues coordinate Mg(2+): Ser-36 and Thr-58.

Belongs to the TRAFAC class TrmE-Era-EngA-EngB-Septin-like GTPase superfamily. EngB GTPase family. It depends on Mg(2+) as a cofactor.

In terms of biological role, necessary for normal cell division and for the maintenance of normal septation. The protein is Probable GTP-binding protein EngB of Campylobacter lari (strain RM2100 / D67 / ATCC BAA-1060).